The following is a 277-amino-acid chain: MSSKSQLTYSARASKHPNALVKKLFEVAEAKKTNVTVSADVTTTKELLDLADRLGPYIAVIKTHIDILSDFSEETITGLKALAEKHNFLIFEDRKFIDIGNTVQKQYHGGTLRISEWAHIINCSILPGEGIVEALAQTASAEDFPYGSERGLLILAEMTSKGSLATGQYTTSSVDYARKYKKFVMGFVSTRHLGEVQSEVSSPSEEEDFVVFTTGVNLSSKGDKLGQQYQTPESAVGRGADFIIAGRGIYAAPDPVEAAKQYQKEGWDAYLKRVGAQ.

Residues D40, 62–64 (KTH), 93–102 (DRKFIDIGNT), Y229, and R247 contribute to the substrate site. The Proton donor role is filled by K95.

It belongs to the OMP decarboxylase family.

The enzyme catalyses orotidine 5'-phosphate + H(+) = UMP + CO2. It functions in the pathway pyrimidine metabolism; UMP biosynthesis via de novo pathway; UMP from orotate: step 2/2. In Aspergillus oryzae (strain ATCC 42149 / RIB 40) (Yellow koji mold), this protein is Orotidine 5'-phosphate decarboxylase (pyrG).